The chain runs to 90 residues: Large ribosomal subunit protein bL27 (90 aa).

It belongs to the bacterial ribosomal protein bL27 family.

The sequence is that of Large ribosomal subunit protein bL27 from Paracoccus denitrificans (strain Pd 1222).